The primary structure comprises 883 residues: Alanine--tRNA ligase (883 aa).

His562, His566, Cys675, and His679 together coordinate Zn(2+).

The protein belongs to the class-II aminoacyl-tRNA synthetase family. The cofactor is Zn(2+).

It is found in the cytoplasm. The enzyme catalyses tRNA(Ala) + L-alanine + ATP = L-alanyl-tRNA(Ala) + AMP + diphosphate. Catalyzes the attachment of alanine to tRNA(Ala) in a two-step reaction: alanine is first activated by ATP to form Ala-AMP and then transferred to the acceptor end of tRNA(Ala). Also edits incorrectly charged Ser-tRNA(Ala) and Gly-tRNA(Ala) via its editing domain. The chain is Alanine--tRNA ligase from Ruegeria sp. (strain TM1040) (Silicibacter sp.).